An 802-amino-acid chain; its full sequence is Phenylalanine--tRNA ligase beta subunit (802 aa).

The tRNA-binding domain occupies 39-154; sequence AEGLSKLVVG…EDAVPGDSIF (116 aa). The B5 domain occupies 407–482; the sequence is TEPVQVSTSL…RIYGYEKLPT (76 aa). Positions 460, 466, 469, and 470 each coordinate Mg(2+). In terms of domain architecture, FDX-ACB spans 709–802; that stretch reads TKFPAVSRDI…LTEKVEAEVR (94 aa).

It belongs to the phenylalanyl-tRNA synthetase beta subunit family. Type 1 subfamily. In terms of assembly, tetramer of two alpha and two beta subunits. Requires Mg(2+) as cofactor.

The protein localises to the cytoplasm. It catalyses the reaction tRNA(Phe) + L-phenylalanine + ATP = L-phenylalanyl-tRNA(Phe) + AMP + diphosphate + H(+). The chain is Phenylalanine--tRNA ligase beta subunit from Streptococcus thermophilus (strain CNRZ 1066).